The primary structure comprises 371 residues: Glutamate 5-kinase (371 aa).

K11 provides a ligand contact to ATP. Substrate is bound by residues S52, D139, and N151. ATP contacts are provided by residues 171 to 172 (TD) and 213 to 219 (TGGMATK). Residues 278 to 356 (EGSLTLDEGA…AEIPRILGYE (79 aa)) enclose the PUA domain.

Belongs to the glutamate 5-kinase family.

The protein localises to the cytoplasm. It carries out the reaction L-glutamate + ATP = L-glutamyl 5-phosphate + ADP. Its pathway is amino-acid biosynthesis; L-proline biosynthesis; L-glutamate 5-semialdehyde from L-glutamate: step 1/2. In terms of biological role, catalyzes the transfer of a phosphate group to glutamate to form L-glutamate 5-phosphate. This Synechococcus sp. (strain JA-2-3B'a(2-13)) (Cyanobacteria bacterium Yellowstone B-Prime) protein is Glutamate 5-kinase.